Here is a 318-residue protein sequence, read N- to C-terminus: Probable cell division protein WhiA (318 aa).

The segment at residues 281–314 (SLKELGQMLVPPVGKSGVNHRLRKIEEISKKLKE) is a DNA-binding region (H-T-H motif).

The protein belongs to the WhiA family.

In terms of biological role, involved in cell division and chromosome segregation. This chain is Probable cell division protein WhiA, found in Thermoanaerobacter pseudethanolicus (strain ATCC 33223 / 39E) (Clostridium thermohydrosulfuricum).